A 251-amino-acid chain; its full sequence is Octanoyltransferase (251 aa).

Residues 56 to 241 enclose the BPL/LPL catalytic domain; sequence ADTGDEIWVV…NLDGASAAAD (186 aa). Residues 96 to 103, 168 to 170, and 181 to 183 each bind substrate; these read RGGQITYH, ALG, and GLS. Cys199 acts as the Acyl-thioester intermediate in catalysis.

The protein belongs to the LipB family.

It localises to the cytoplasm. It catalyses the reaction octanoyl-[ACP] + L-lysyl-[protein] = N(6)-octanoyl-L-lysyl-[protein] + holo-[ACP] + H(+). It participates in protein modification; protein lipoylation via endogenous pathway; protein N(6)-(lipoyl)lysine from octanoyl-[acyl-carrier-protein]: step 1/2. In terms of biological role, catalyzes the transfer of endogenously produced octanoic acid from octanoyl-acyl-carrier-protein onto the lipoyl domains of lipoate-dependent enzymes. Lipoyl-ACP can also act as a substrate although octanoyl-ACP is likely to be the physiological substrate. In Burkholderia cenocepacia (strain HI2424), this protein is Octanoyltransferase.